A 271-amino-acid polypeptide reads, in one-letter code: TIP41-like protein (271 aa).

At K106 the chain carries N6-acetyllysine. The interval 173–271 is interaction with PPP2CA; that stretch reads RVMPSSFFLL…PVDSESAPSE (99 aa). Phosphoserine occurs at positions 265 and 270.

The protein belongs to the TIP41 family. Interacts with PPP2CA. Interacts with PPP2CB, PPP4C and PPP6C. Interacts with IGBP1; the interaction is dependent on PPP2CA. Associates with a protein phosphatase 2A PP2A(C):IGBP1 complex. Interacts with PPP4C and PPP4R2.

The protein localises to the cytoplasm. Its function is as follows. May be a allosteric regulator of serine/threonine-protein phosphatase 2A (PP2A). Inhibits catalytic activity of the PP2A(D) core complex in vitro. The PP2A(C):TIPRL complex does not show phosphatase activity. Acts as a negative regulator of serine/threonine-protein phosphatase 4 probably by inhibiting the formation of the active PPP4C:PPP4R2 complex; the function is proposed to implicate it in DNA damage response by promoting H2AX phosphorylated on Ser-140 (gamma-H2AX). May play a role in the regulation of ATM/ATR signaling pathway controlling DNA replication and repair. This is TIP41-like protein (Tiprl) from Rattus norvegicus (Rat).